Consider the following 404-residue polypeptide: Latent membrane protein 1 (404 aa).

Topologically, residues 1-23 are cytoplasmic; the sequence is MERDLESAPPSAPRPPLGPPLSS. Residues 24–44 form a helical membrane-spanning segment; sequence SIGLALLLLLLALLFWLYIVM. Over 45–51 the chain is Extracellular; it reads SDWTGGA. Residues 52–72 traverse the membrane as a helical segment; it reads LLVLYSFALMLIIIILIIFIF. At 73–75 the chain is on the cytoplasmic side; the sequence is RRD. Residues 76 to 96 traverse the membrane as a helical segment; it reads LLCPLGGLGLLLLMITLLLIA. Residues 97–106 are Extracellular-facing; the sequence is LWNLHGQALY. Residues 107-127 form a helical membrane-spanning segment; sequence LGIVLFIFGCLLVFGIWIYFL. Residues 128–139 lie on the Cytoplasmic side of the membrane; it reads EILWRLGATLWQ. The helical transmembrane segment at 140–160 threads the bilayer; the sequence is LLAFILAFFLAIILLIIALYL. Over 161-163 the chain is Extracellular; sequence QQN. The helical transmembrane segment at 164–184 threads the bilayer; sequence WWTLLVDLLWLLLFMAILIWM. Topologically, residues 185–404 are cytoplasmic; that stretch reads YYHGPRHTDE…HGPVQLSYYD (220 aa). The interval 194 to 232 is CTAR1; the sequence is EHHHDDSLPHPQQATDDSSHESDSNSNEGRHHLLVSGAG. Residues 194-404 form a disordered region; it reads EHHHDDSLPH…HGPVQLSYYD (211 aa). The Interaction with host TRAF proteins motif lies at 204–208; the sequence is PQQAT. Positions 210 to 224 are enriched in basic and acidic residues; that stretch reads DSSHESDSNSNEGRH. 2 stretches are compositionally biased toward low complexity: residues 251–322 and 375–384; these read NGPQ…PQDP and PHLPTLLLGT. The segment at 370-404 is CTAR2; the sequence is GGGGDPHLPTLLLGTSGSGGDDDDPHGPVQLSYYD.

Belongs to the herpesviridae LMP-1 family. As to quaternary structure, interacts (via PXQXT motif) with host tumor necrosis factor receptor-associated factor (TRAF) proteins TRAF1, TRAF2, TRAF3 and TRAF5. Interacts with human protein ZMYND11; leading to negatively regulate NF-kappa-B activation. Interacts with host UBE2I; this interaction induces the sumoylation of various cellular proteins. Interacts with host IRF7. Interacts with host TYK2. Post-translationally, ubiquitinated on the N-terminus.

The protein resides in the host cell membrane. Its function is as follows. Acts as a CD40 functional homolog to prevent apoptosis of infected B-lymphocytes and drive their proliferation. Functions as a constitutively active tumor necrosis factor receptor that induces the activation of several signaling pathways, including those of the NF-kappa-B family. LMP1 signaling leads to up-regulation of antiapoptotic proteins and provide growth signals in latently infected cells. Interacts with host UBE2I and subsequently affects the sumoylation state of several cellular proteins. For example, induces the sumoylation of host IRF7 thereby limiting its transcriptional activity and modulating the activation of innate immune responses. Also inhibits host IFN-alpha-stimulated STAT2 nuclear translocation and interferon-stimulated response element transcriptional activity by interacting with and inhibiting host TYK2. Induces SUMO expression during viral latency thereby dysregulating the host sumoylation processes. This Homo sapiens (Human) protein is Latent membrane protein 1 (LMP1).